The primary structure comprises 135 residues: Inner membrane protein YgfX (135 aa).

At 1–11 the chain is on the cytoplasmic side; sequence MVLWQSDLRVS. Residues 1–96 form a not required to inhibit FtsZ or MreB polymerization region; sequence MVLWQSDLRV…APWMIKSGMM (96 aa). The helical transmembrane segment at 12–32 threads the bilayer; sequence WRAQWLSLLIHGLVAAVILLM. Over 33–37 the chain is Periplasmic; sequence PWPLS. The helical transmembrane segment at 38 to 54 threads the bilayer; the sequence is YTPLWMVLLSLVVFDCV. Residues 55–135 lie on the Cytoplasmic side of the membrane; sequence RSQRRINARQ…RILLQQETQR (81 aa).

In terms of assembly, interacts with MreB and FtsZ; interaction with the latter requires FtsZ residues 33-49.

It is found in the cell inner membrane. A probable inner membrane protein. Has been shown not to be a toxin, no effects on growth are seen in LB or minimal medium up to 6 or 21 hours (respectively) after induction of expression. Interacts with cytoskeletal proteins FtsZ and MreB; inhibits FtsZ GTP-dependent polymerization as well as MreB ATP-dependent polymerization. Restores production of prodigiosin antibiotic (Pig) in Serratia strains with deletions of sdhE-ygfX; overexpression of this protein and CptB also restores Pig production to a slightly lesser extent in Serratia. The protein is Inner membrane protein YgfX of Escherichia coli (strain K12).